The chain runs to 183 residues: Ribosome maturation factor RimM (183 aa).

The region spanning 96 to 171 is the PRC barrel domain; it reads PDEFYDHELE…VALIDPPEGL (76 aa).

It belongs to the RimM family. Binds ribosomal protein uS19.

The protein localises to the cytoplasm. In terms of biological role, an accessory protein needed during the final step in the assembly of 30S ribosomal subunit, possibly for assembly of the head region. Essential for efficient processing of 16S rRNA. May be needed both before and after RbfA during the maturation of 16S rRNA. It has affinity for free ribosomal 30S subunits but not for 70S ribosomes. This Rhodococcus jostii (strain RHA1) protein is Ribosome maturation factor RimM.